The primary structure comprises 202 residues: 3-isopropylmalate dehydratase small subunit (202 aa).

The protein belongs to the LeuD family. LeuD type 1 subfamily. Heterodimer of LeuC and LeuD.

It carries out the reaction (2R,3S)-3-isopropylmalate = (2S)-2-isopropylmalate. The protein operates within amino-acid biosynthesis; L-leucine biosynthesis; L-leucine from 3-methyl-2-oxobutanoate: step 2/4. Catalyzes the isomerization between 2-isopropylmalate and 3-isopropylmalate, via the formation of 2-isopropylmaleate. The protein is 3-isopropylmalate dehydratase small subunit of Rhizobium johnstonii (strain DSM 114642 / LMG 32736 / 3841) (Rhizobium leguminosarum bv. viciae).